A 291-amino-acid polypeptide reads, in one-letter code: Ribosomal RNA small subunit methyltransferase H (291 aa).

S-adenosyl-L-methionine contacts are provided by residues 25–27 (GGH), Asp-45, Phe-73, Asp-88, and Gln-95.

This sequence belongs to the methyltransferase superfamily. RsmH family.

The protein localises to the cytoplasm. The catalysed reaction is cytidine(1402) in 16S rRNA + S-adenosyl-L-methionine = N(4)-methylcytidine(1402) in 16S rRNA + S-adenosyl-L-homocysteine + H(+). In terms of biological role, specifically methylates the N4 position of cytidine in position 1402 (C1402) of 16S rRNA. The polypeptide is Ribosomal RNA small subunit methyltransferase H (Flavobacterium psychrophilum (strain ATCC 49511 / DSM 21280 / CIP 103535 / JIP02/86)).